The sequence spans 316 residues: tRNA dimethylallyltransferase (316 aa).

Residue 15–22 participates in ATP binding; that stretch reads GPTASGKS. Residue 17-22 coordinates substrate; the sequence is TASGKS. The segment at 40–43 is interaction with substrate tRNA; the sequence is DSRQ.

Belongs to the IPP transferase family. In terms of assembly, monomer. Requires Mg(2+) as cofactor.

It carries out the reaction adenosine(37) in tRNA + dimethylallyl diphosphate = N(6)-dimethylallyladenosine(37) in tRNA + diphosphate. In terms of biological role, catalyzes the transfer of a dimethylallyl group onto the adenine at position 37 in tRNAs that read codons beginning with uridine, leading to the formation of N6-(dimethylallyl)adenosine (i(6)A). This is tRNA dimethylallyltransferase from Chlorobium limicola (strain DSM 245 / NBRC 103803 / 6330).